The chain runs to 520 residues: Peptide chain release factor 3 (520 aa).

One can recognise a tr-type G domain in the interval glutamate 8–asparagine 273. GTP contacts are provided by residues serine 17–threonine 24, aspartate 85–histidine 89, and asparagine 139–aspartate 142.

It belongs to the TRAFAC class translation factor GTPase superfamily. Classic translation factor GTPase family. PrfC subfamily.

The protein localises to the cytoplasm. Functionally, increases the formation of ribosomal termination complexes and stimulates activities of RF-1 and RF-2. It binds guanine nucleotides and has strong preference for UGA stop codons. It may interact directly with the ribosome. The stimulation of RF-1 and RF-2 is significantly reduced by GTP and GDP, but not by GMP. This chain is Peptide chain release factor 3, found in Staphylococcus carnosus (strain TM300).